Here is a 505-residue protein sequence, read N- to C-terminus: DNA primase large subunit (505 aa).

The segment at 253-270 is interdomain linker; the sequence is LSHSYTGQDYSTQKNTGK. Residues 266-503 are interacts with PRIM1; the sequence is KNTGKISLDQ…LEMDLEGLEE (238 aa). [4Fe-4S] cluster is bound by residues cysteine 287, cysteine 367, cysteine 384, and cysteine 424. Positions 300–442 are RNA:DNA duplex binding; sequence HLRHGGRMQY…NVDDCGFSLN (143 aa). Positions 463–486 are disordered; that stretch reads KEISQPETPQHKPSTQKTRDAASA. Residues 467–478 show a composition bias toward polar residues; sequence QPETPQHKPSTQ. At threonine 470 the chain carries Phosphothreonine.

This sequence belongs to the eukaryotic-type primase large subunit family. In terms of assembly, heterodimer of a catalytic subunit PRIM1 and a regulatory subunit PRIM2, also known as the DNA primase complex. Interacts via (C-terminus) with PRIM1. Component of the alpha DNA polymerase complex (also known as the alpha DNA polymerase-primase complex) consisting of four subunits: the catalytic subunit POLA1, the regulatory subunit POLA2, and the primase complex subunits PRIM1 and PRIM2 respectively. Within the complex, POLA1 directly interacts with PRIM2. It depends on [4Fe-4S] cluster as a cofactor.

In terms of biological role, regulatory subunit of the DNA primase complex and component of the DNA polymerase alpha complex (also known as the alpha DNA polymerase-primase complex) which play an essential role in the initiation of DNA synthesis. During the S phase of the cell cycle, the DNA polymerase alpha complex (composed of a catalytic subunit POLA1, an accessory subunit POLA2 and two primase subunits, the catalytic subunit PRIM1 and the regulatory subunit PRIM2) is recruited to DNA at the replicative forks via direct interactions with MCM10 and WDHD1. The primase subunit of the polymerase alpha complex initiates DNA synthesis by oligomerising short RNA primers on both leading and lagging strands. These primers are initially extended by the polymerase alpha catalytic subunit and subsequently transferred to polymerase delta and polymerase epsilon for processive synthesis on the lagging and leading strand, respectively. In the primase complex, both subunits are necessary for the initial di-nucleotide formation, but the extension of the primer depends only on the catalytic subunit. Binds RNA:DNA duplex and coordinates the catalytic activities of PRIM1 and POLA2 during primase-to-polymerase switch. This is DNA primase large subunit (Prim2) from Mus musculus (Mouse).